Consider the following 544-residue polypeptide: Cytochrome P450 monooxygenase verL (544 aa).

A helical transmembrane segment spans residues 3-23; the sequence is VALFPILPIGCLLIYIIFKLW. Cys446 serves as a coordination point for heme. The tract at residues 520–544 is disordered; sequence QEKGIDGWKGKKESSSEENRGVSSR.

This sequence belongs to the cytochrome P450 family. It depends on heme as a cofactor.

Its subcellular location is the membrane. Its pathway is mycotoxin biosynthesis. Cytochrome P450 monooxygenase; part of the gene cluster that mediates the biosynthesis of 11'-deoxyverticillin A, one of the dimeric epipolythiodioxopiperazines (ETPs) from the verticillin family that act as mycotoxins. 11'-deoxyverticillin A is required for normal conidiation. The nonribosomal peptide synthetase verP is speculated to be responsible for condensation of amino acids to form the carbon skeleton of verticillin, whereas the cluster-specific tailoring enzymes are involved in further modifications leading to the production of 11'-deoxyverticillin A. In Clonostachys rogersoniana, this protein is Cytochrome P450 monooxygenase verL.